The following is a 397-amino-acid chain: Serpin B10 (397 aa).

Cys68 and Cys395 are joined by a disulfide. The short motif at 74–77 (KKRK) is the Nuclear localization signal element.

This sequence belongs to the serpin family. Ov-serpin subfamily. In terms of tissue distribution, expressed specifically in myeloid cells and the bone marrow.

Its subcellular location is the nucleus. It is found in the cytoplasm. Its function is as follows. Protease inhibitor that may play a role in the regulation of protease activities during hematopoiesis and apoptosis induced by TNF. May regulate protease activities in the cytoplasm and in the nucleus. The sequence is that of Serpin B10 (SERPINB10) from Homo sapiens (Human).